The chain runs to 136 residues: Histone H3 (136 aa).

The disordered stretch occupies residues 1–42 (MARTKQTARKSTGGKAPRKQLATKAAAKSAPATGGVKKPHRY). Lysine 5 bears the N6-methylated lysine mark. Residue lysine 10 is modified to N6-acetyllysine; alternate. Lysine 10 is modified (N6-methylated lysine; alternate). Phosphoserine is present on serine 11. 2 positions are modified to N6-acetyllysine: lysine 15 and lysine 24. Residues 22–33 (ATKAAAKSAPAT) show a composition bias toward low complexity. An N6-methylated lysine mark is found at lysine 28, lysine 37, and lysine 80.

Belongs to the histone H3 family. As to quaternary structure, the nucleosome is a histone octamer containing two molecules each of H2A, H2B, H3 and H4 assembled in one H3-H4 heterotetramer and two H2A-H2B heterodimers. The octamer wraps approximately 147 bp of DNA. Acetylation is generally linked to gene activation. Post-translationally, methylation at Lys-5 is linked to gene activation. Methylation at Lys-10 is linked to gene repression.

Its subcellular location is the nucleus. It localises to the chromosome. Its function is as follows. Core component of nucleosome. Nucleosomes wrap and compact DNA into chromatin, limiting DNA accessibility to the cellular machineries which require DNA as a template. Histones thereby play a central role in transcription regulation, DNA repair, DNA replication and chromosomal stability. DNA accessibility is regulated via a complex set of post-translational modifications of histones, also called histone code, and nucleosome remodeling. The chain is Histone H3 from Acropora formosa (Staghorn coral).